A 332-amino-acid polypeptide reads, in one-letter code: tRNA-dihydrouridine synthase B (332 aa).

FMN is bound by residues P16–A18 and Q70. The Proton donor role is filled by C100. FMN is bound by residues K139, N200–D202, and G224–R225.

This sequence belongs to the Dus family. DusB subfamily. The cofactor is FMN.

The catalysed reaction is a 5,6-dihydrouridine in tRNA + NAD(+) = a uridine in tRNA + NADH + H(+). It carries out the reaction a 5,6-dihydrouridine in tRNA + NADP(+) = a uridine in tRNA + NADPH + H(+). In terms of biological role, catalyzes the synthesis of 5,6-dihydrouridine (D), a modified base found in the D-loop of most tRNAs, via the reduction of the C5-C6 double bond in target uridines. The polypeptide is tRNA-dihydrouridine synthase B (Xanthomonas campestris pv. campestris (strain ATCC 33913 / DSM 3586 / NCPPB 528 / LMG 568 / P 25)).